The following is a 162-amino-acid chain: Cyanate hydratase (162 aa).

Residues Arg103, Glu106, and Ser129 contribute to the active site.

Belongs to the cyanase family.

The catalysed reaction is cyanate + hydrogencarbonate + 3 H(+) = NH4(+) + 2 CO2. Catalyzes the reaction of cyanate with bicarbonate to produce ammonia and carbon dioxide. In Phaeosphaeria nodorum (strain SN15 / ATCC MYA-4574 / FGSC 10173) (Glume blotch fungus), this protein is Cyanate hydratase.